A 415-amino-acid polypeptide reads, in one-letter code: Actin-like protein 7B (415 aa).

The disordered stretch occupies residues 1–35 (MATRNSPMALGTAQGDPGEAGTRPGSDAGLRDTGA). Residue S6 is modified to Phosphoserine.

The protein belongs to the actin family.

The protein localises to the cytoplasm. The protein resides in the cytoskeleton. This chain is Actin-like protein 7B (ACTL7B), found in Macaca fascicularis (Crab-eating macaque).